The chain runs to 293 residues: Kynurenine formamidase (293 aa).

The HGGXW motif lies at 84-88 (HGGYW). The active-site Nucleophile is the serine 153. Residues aspartate 236 and histidine 268 contribute to the active site.

Belongs to the kynurenine formamidase family. In terms of assembly, homodimer.

The protein localises to the cytoplasm. It localises to the cytosol. The protein resides in the nucleus. The enzyme catalyses N-formyl-L-kynurenine + H2O = L-kynurenine + formate + H(+). It participates in amino-acid degradation; L-tryptophan degradation via kynurenine pathway; L-kynurenine from L-tryptophan: step 2/2. In terms of biological role, catalyzes the hydrolysis of N-formyl-L-kynurenine to L-kynurenine, the second step in the kynurenine pathway of tryptophan degradation. Kynurenine may be further oxidized to nicotinic acid, NAD(H) and NADP(H). Required for elimination of toxic metabolites. The chain is Kynurenine formamidase (afmid) from Danio rerio (Zebrafish).